A 396-amino-acid chain; its full sequence is MHYLKFPAIIAGMLLAGAASAEGPRARDLGVPFAGKPGANNAITDVAGVEVGYVSLISGEGKLERGKGPVRTGVTAVLPRGKESRTPVYAGWETSNAAGEMTGTVWLEERGYFDGPMMITNTHSVGVVRDAVVGWLADVKWPGAWFTPVVAETYDGMLNDINGFHVKPEHALRAIQTAASGPVAEGNVGGGVGMQCFGFKGGTGTASRVVEMDGKSYTVGVLVQCNFGMRPWLRVAGAPVGEELAGKYLPETRGTQTAAATNNGVAPGDGSIIVVMATDAPMLPHQLKRLAKRAAAGMGRMGDAGSNGSGDIFVAFSTANANVQSVGGNVISVETMPNDKLTLIFEAATQATEEAITNVLVAADTLTGVNGYTIQRLPHAELRAILKKYRRLAAAK.

A signal peptide spans 1 to 21 (MHYLKFPAIIAGMLLAGAASA). Ser-271 serves as the catalytic Nucleophile. Catalysis depends on proton donor/acceptor residues Ser-309 and Asp-311.

This sequence belongs to the peptidase S58 family. As to quaternary structure, heterooctamer of 4 heterodimers ((alpha:beta)4); each heterodimer is composed of an alpha subunit and a beta subunit processed from the same precursor. Autoproteolytic processing to generate the alpha and beta subunit is required for self-activation and is proposed to use a similar mechanism as substrate cleavage.

The protein resides in the periplasm. It carries out the reaction Cleaves N-terminal beta-homoamino acids from peptides composed of 2 to 6 amino acids.. Its activity is regulated as follows. Inhibited by AEBSF (4-(2-aminoethyl)benzenesulfonyl fluoride, Pefabloc SC). In terms of biological role, beta-aminopeptidase that can cleave synthetic beta-peptides which consist of backbone-elongated beta-amino acid residues that are not processed by common proteolytic enzymes. Can cleave the beta-peptides beta-homoVal-beta-homoAla-beta-homoLeu and beta-homoAla-beta-homoLeu. Requires a beta-amino acid at the N-terminus of peptide substrates and cleaves the peptide bond between the N-terminal beta-amino acid and the amino acid at the second position of tripeptidic substrates of the general structure H-betahXaa-Ile-betahTyr-OH according to the following preferences with regard to the side chain of the N-terminal beta-amino acid: aliphatic and aromatic &gt; OH-containing &gt; hydrogen, basic and polar. beta-homoVal-beta-homoAla-beta-homoLeu and beta-homoAla-beta-homoLeu. The sequence is that of Beta-peptidyl aminopeptidase BapA from Sphingosinicella microcystinivorans.